We begin with the raw amino-acid sequence, 209 residues long: Redox-sensing transcriptional repressor Rex (209 aa).

A DNA-binding region (H-T-H motif) is located at residues 16–55 (VYIQVLTGLKRDGVEVISSEKLARACSVNPSQIRKDLAYF). An NAD(+)-binding site is contributed by 90 to 95 (GVGNLG).

The protein belongs to the transcriptional regulatory Rex family. As to quaternary structure, homodimer.

Its subcellular location is the cytoplasm. Modulates transcription in response to changes in cellular NADH/NAD(+) redox state. The sequence is that of Redox-sensing transcriptional repressor Rex from Maridesulfovibrio salexigens (strain ATCC 14822 / DSM 2638 / NCIMB 8403 / VKM B-1763) (Desulfovibrio salexigens).